Consider the following 347-residue polypeptide: Aspartate-semialdehyde dehydrogenase (347 aa).

Residues 13–16 (TGAV) and 41–42 (RS) each bind NADP(+). Residue arginine 101 coordinates phosphate. The active-site Acyl-thioester intermediate is cysteine 132. Position 159 (glutamine 159) interacts with substrate. An NADP(+)-binding site is contributed by 162–163 (SG). Lysine 216 lines the phosphate pocket. Residue arginine 238 coordinates substrate. Histidine 245 functions as the Proton acceptor in the catalytic mechanism. Residue asparagine 319 coordinates NADP(+).

It belongs to the aspartate-semialdehyde dehydrogenase family. As to quaternary structure, homodimer.

It carries out the reaction L-aspartate 4-semialdehyde + phosphate + NADP(+) = 4-phospho-L-aspartate + NADPH + H(+). The protein operates within amino-acid biosynthesis; L-lysine biosynthesis via DAP pathway; (S)-tetrahydrodipicolinate from L-aspartate: step 2/4. It participates in amino-acid biosynthesis; L-methionine biosynthesis via de novo pathway; L-homoserine from L-aspartate: step 2/3. It functions in the pathway amino-acid biosynthesis; L-threonine biosynthesis; L-threonine from L-aspartate: step 2/5. In terms of biological role, catalyzes the NADPH-dependent formation of L-aspartate-semialdehyde (L-ASA) by the reductive dephosphorylation of L-aspartyl-4-phosphate. In Legionella pneumophila, this protein is Aspartate-semialdehyde dehydrogenase.